A 505-amino-acid polypeptide reads, in one-letter code: Chemotaxis regulatory protein ChePep (505 aa).

2 disordered regions span residues 154-403 and 420-465; these read EPNN…EDIP and EAVA…SSPL. 5 stretches are compositionally biased toward basic and acidic residues: residues 172-263, 289-311, 337-346, 359-373, and 386-398; these read EEVK…EKTQ, ENKE…EVVT, QAHELEKQEI, QDKE…KEET, and PQEK…HYES. Residues 440–451 show a composition bias toward low complexity; sequence TETSKNENNTET.

As to quaternary structure, interacts with CheZ; the interaction is essential for each other polar localization.

It localises to the cytoplasm. Its function is as follows. Plays an essential role in chemotaxis. Regulates flagellar rotation through the formation of a complex with chemotaxis protein CheZ. Plays a major role in colonization of the stomach. This is Chemotaxis regulatory protein ChePep from Helicobacter pylori (strain ATCC 700392 / 26695) (Campylobacter pylori).